The chain runs to 255 residues: Large ribosomal subunit protein uL4 (255 aa).

The protein belongs to the universal ribosomal protein uL4 family. Part of the 50S ribosomal subunit.

In terms of biological role, one of the primary rRNA binding proteins, this protein initially binds near the 5'-end of the 23S rRNA. It is important during the early stages of 50S assembly. It makes multiple contacts with different domains of the 23S rRNA in the assembled 50S subunit and ribosome. Its function is as follows. Forms part of the polypeptide exit tunnel. This is Large ribosomal subunit protein uL4 from Thermoplasma volcanium (strain ATCC 51530 / DSM 4299 / JCM 9571 / NBRC 15438 / GSS1).